We begin with the raw amino-acid sequence, 117 residues long: Glycine cleavage system H-like protein (117 aa).

A Lipoyl-binding domain is found at 21 to 103 (IVRLGLSSRM…ESEGWFVVLQ (83 aa)). Lys-62 is subject to N6-lipoyllysine.

It belongs to the GcvH family. (R)-lipoate serves as cofactor.

The sequence is that of Glycine cleavage system H-like protein from Chlamydia muridarum (strain MoPn / Nigg).